A 345-amino-acid chain; its full sequence is Gibberellin 2-beta-dioxygenase 2 (345 aa).

Positions 170 to 285 (HSDSLLRINH…RMSMMYFAAP (116 aa)) constitute a Fe2OG dioxygenase domain. Histidine 209, aspartate 211, and histidine 266 together coordinate Fe cation. Arginine 276 is a catalytic residue.

This sequence belongs to the iron/ascorbate-dependent oxidoreductase family. GA2OX subfamily. Fe cation is required as a cofactor. As to expression, predominantly expressed in leaves.

It carries out the reaction gibberellin A1 + 2-oxoglutarate + O2 = gibberellin A8 + succinate + CO2. The protein operates within plant hormone biosynthesis; gibberellin biosynthesis. In terms of biological role, catalyzes the 2-beta-hydroxylation of several biologically active gibberellins, leading to the homeostatic regulation of their endogenous level. Catabolism of gibberellins (GAs) plays a central role in plant development. Converts GA9/GA20 to GA51/GA29 and GA4/GA1 to GA34/GA8. This Pisum sativum (Garden pea) protein is Gibberellin 2-beta-dioxygenase 2 (GA2OX2).